The sequence spans 508 residues: Bifunctional purine biosynthesis protein PurH (508 aa).

In terms of domain architecture, MGS-like spans 1-145; that stretch reads MIKRALLSTY…KNYKDVIVVV (145 aa).

It belongs to the PurH family.

The catalysed reaction is (6R)-10-formyltetrahydrofolate + 5-amino-1-(5-phospho-beta-D-ribosyl)imidazole-4-carboxamide = 5-formamido-1-(5-phospho-D-ribosyl)imidazole-4-carboxamide + (6S)-5,6,7,8-tetrahydrofolate. It carries out the reaction IMP + H2O = 5-formamido-1-(5-phospho-D-ribosyl)imidazole-4-carboxamide. It functions in the pathway purine metabolism; IMP biosynthesis via de novo pathway; 5-formamido-1-(5-phospho-D-ribosyl)imidazole-4-carboxamide from 5-amino-1-(5-phospho-D-ribosyl)imidazole-4-carboxamide (10-formyl THF route): step 1/1. The protein operates within purine metabolism; IMP biosynthesis via de novo pathway; IMP from 5-formamido-1-(5-phospho-D-ribosyl)imidazole-4-carboxamide: step 1/1. This chain is Bifunctional purine biosynthesis protein PurH, found in Petrotoga mobilis (strain DSM 10674 / SJ95).